Reading from the N-terminus, the 74-residue chain is MVSLPKLSAKIIIRLIYIYQIGISPILGHHCRFSITCSQYGINSIRNFGILKGCWKTCIRILKCHPFNKNDNTQ.

Belongs to the UPF0161 family.

The protein resides in the cell inner membrane. In terms of biological role, could be involved in insertion of integral membrane proteins into the membrane. In Blochmanniella floridana, this protein is Putative membrane protein insertion efficiency factor.